The sequence spans 348 residues: Chaperone protein DnaJ (348 aa).

Residues 3-65 enclose the J domain; that stretch reads DLYGILGVDH…EQRQRYDRHV (63 aa). The CR-type zinc finger occupies 109 to 191; the sequence is GGSQVVKIDS…CYGNGSRSAP (83 aa). Zn(2+) is bound by residues Cys-122, Cys-125, Cys-139, Cys-142, Cys-165, Cys-168, Cys-179, and Cys-182. CXXCXGXG motif repeat units follow at residues 122-129, 139-146, 165-172, and 179-186; these read CDVCNGTR, CFDCNGSG, CSKCRGNG, and CRRCYGNG.

The protein belongs to the DnaJ family. As to quaternary structure, homodimer. It depends on Zn(2+) as a cofactor.

Its subcellular location is the cytoplasm. Its function is as follows. Participates actively in the response to hyperosmotic and heat shock by preventing the aggregation of stress-denatured proteins and by disaggregating proteins, also in an autonomous, DnaK-independent fashion. Unfolded proteins bind initially to DnaJ; upon interaction with the DnaJ-bound protein, DnaK hydrolyzes its bound ATP, resulting in the formation of a stable complex. GrpE releases ADP from DnaK; ATP binding to DnaK triggers the release of the substrate protein, thus completing the reaction cycle. Several rounds of ATP-dependent interactions between DnaJ, DnaK and GrpE are required for fully efficient folding. Also involved, together with DnaK and GrpE, in the DNA replication of plasmids through activation of initiation proteins. The chain is Chaperone protein DnaJ from Tropheryma whipplei (strain Twist) (Whipple's bacillus).